A 145-amino-acid chain; its full sequence is [Ribosomal protein bS18]-alanine N-acetyltransferase (145 aa).

In terms of domain architecture, N-acetyltransferase spans 1–145 (MIETIVEQDF…ENAVIMALYL (145 aa)). 67–69 (LAV) is an acetyl-CoA binding site. The active-site Proton acceptor is Glu101. Asn106 contributes to the acetyl-CoA binding site. Tyr113 acts as the Proton donor in catalysis.

It belongs to the acetyltransferase family. RimI subfamily.

The protein resides in the cytoplasm. It carries out the reaction N-terminal L-alanyl-[ribosomal protein bS18] + acetyl-CoA = N-terminal N(alpha)-acetyl-L-alanyl-[ribosomal protein bS18] + CoA + H(+). In terms of biological role, acetylates the N-terminal alanine of ribosomal protein bS18. The polypeptide is [Ribosomal protein bS18]-alanine N-acetyltransferase (Haemophilus ducreyi (strain 35000HP / ATCC 700724)).